Reading from the N-terminus, the 114-residue chain is Ribonuclease P protein component (114 aa).

The protein belongs to the RnpA family. In terms of assembly, consists of a catalytic RNA component (M1 or rnpB) and a protein subunit.

The catalysed reaction is Endonucleolytic cleavage of RNA, removing 5'-extranucleotides from tRNA precursor.. Functionally, RNaseP catalyzes the removal of the 5'-leader sequence from pre-tRNA to produce the mature 5'-terminus. It can also cleave other RNA substrates such as 4.5S RNA. The protein component plays an auxiliary but essential role in vivo by binding to the 5'-leader sequence and broadening the substrate specificity of the ribozyme. The sequence is that of Ribonuclease P protein component from Lactiplantibacillus plantarum (strain ATCC BAA-793 / NCIMB 8826 / WCFS1) (Lactobacillus plantarum).